Reading from the N-terminus, the 156-residue chain is Small ribosomal subunit protein uS7 (156 aa).

Belongs to the universal ribosomal protein uS7 family. Part of the 30S ribosomal subunit. Contacts proteins S9 and S11.

Its function is as follows. One of the primary rRNA binding proteins, it binds directly to 16S rRNA where it nucleates assembly of the head domain of the 30S subunit. Is located at the subunit interface close to the decoding center, probably blocks exit of the E-site tRNA. The sequence is that of Small ribosomal subunit protein uS7 from Paramagnetospirillum magneticum (strain ATCC 700264 / AMB-1) (Magnetospirillum magneticum).